Reading from the N-terminus, the 124-residue chain is Small ribosomal subunit protein uS12 (124 aa).

The disordered stretch occupies residues methionine 1–aspartate 25. Aspartate 89 bears the 3-methylthioaspartic acid mark.

The protein belongs to the universal ribosomal protein uS12 family. Part of the 30S ribosomal subunit. Contacts proteins S8 and S17. May interact with IF1 in the 30S initiation complex.

Its function is as follows. With S4 and S5 plays an important role in translational accuracy. Interacts with and stabilizes bases of the 16S rRNA that are involved in tRNA selection in the A site and with the mRNA backbone. Located at the interface of the 30S and 50S subunits, it traverses the body of the 30S subunit contacting proteins on the other side and probably holding the rRNA structure together. The combined cluster of proteins S8, S12 and S17 appears to hold together the shoulder and platform of the 30S subunit. This chain is Small ribosomal subunit protein uS12, found in Stenotrophomonas maltophilia (strain R551-3).